We begin with the raw amino-acid sequence, 301 residues long: MAAREMLYVNRETGKVEQERIICSSLVKFFIETRIGRALYSVLCKNSLFSRIVGWCQRLRVTRYFIKPFVTKYRICIEESASPLHDYASFNDFFVRKLKPDARPICQGEDICVTPADGAYLVFPSMADLSLFTIKNKPFSLESFLGDPQLAHQYAQGSMAIARLAPFDYHRFHFPIAGIAEAPRRINGHLFSIHPLMLKRNFEVFTENKREITIITSKEFGEVAYVEVGALNVGSIHQTFSPGSYVKKGAEKGFFAFGGSTVVLLFQPQRIIFDADLVGYSAQGLETRCRMGQSLGKHFSS.

Catalysis depends on charge relay system; for autoendoproteolytic cleavage activity residues D117, H173, and S260. S260 serves as the catalytic Schiff-base intermediate with substrate; via pyruvic acid; for decarboxylase activity. Position 260 is a pyruvic acid (Ser); by autocatalysis (S260).

It belongs to the phosphatidylserine decarboxylase family. PSD-B subfamily. Prokaryotic type II sub-subfamily. As to quaternary structure, heterodimer of a large membrane-associated beta subunit and a small pyruvoyl-containing alpha subunit. Requires pyruvate as cofactor. Post-translationally, is synthesized initially as an inactive proenzyme. Formation of the active enzyme involves a self-maturation process in which the active site pyruvoyl group is generated from an internal serine residue via an autocatalytic post-translational modification. Two non-identical subunits are generated from the proenzyme in this reaction, and the pyruvate is formed at the N-terminus of the alpha chain, which is derived from the carboxyl end of the proenzyme. The autoendoproteolytic cleavage occurs by a canonical serine protease mechanism, in which the side chain hydroxyl group of the serine supplies its oxygen atom to form the C-terminus of the beta chain, while the remainder of the serine residue undergoes an oxidative deamination to produce ammonia and the pyruvoyl prosthetic group on the alpha chain. During this reaction, the Ser that is part of the protease active site of the proenzyme becomes the pyruvoyl prosthetic group, which constitutes an essential element of the active site of the mature decarboxylase.

It is found in the cell membrane. The enzyme catalyses a 1,2-diacyl-sn-glycero-3-phospho-L-serine + H(+) = a 1,2-diacyl-sn-glycero-3-phosphoethanolamine + CO2. Its pathway is phospholipid metabolism; phosphatidylethanolamine biosynthesis; phosphatidylethanolamine from CDP-diacylglycerol: step 2/2. In terms of biological role, catalyzes the formation of phosphatidylethanolamine (PtdEtn) from phosphatidylserine (PtdSer). The protein is Phosphatidylserine decarboxylase proenzyme of Chlamydia trachomatis serovar L2b (strain UCH-1/proctitis).